A 410-amino-acid polypeptide reads, in one-letter code: Phosphoserine phosphatase (410 aa).

The ACT domain occupies 13–91 (LVKIFGKDRP…QAEIISGIGD (79 aa)). D187 functions as the Nucleophile in the catalytic mechanism. Mg(2+) contacts are provided by D187 and D189. D189 serves as the catalytic Proton donor. Substrate-binding positions include E196, R232, 275–276 (SG), and K320. D343 contributes to the Mg(2+) binding site. Residue N346 participates in substrate binding.

Belongs to the HAD-like hydrolase superfamily. SerB family. Mg(2+) serves as cofactor.

The catalysed reaction is O-phospho-L-serine + H2O = L-serine + phosphate. The enzyme catalyses O-phospho-D-serine + H2O = D-serine + phosphate. The protein operates within amino-acid biosynthesis; L-serine biosynthesis; L-serine from 3-phospho-D-glycerate: step 3/3. Functionally, catalyzes the dephosphorylation of phosphoserine (P-Ser) in vitro. Also catalyzes the dephosphorylation of phosphothreonine (P-Thr) in vitro. The chain is Phosphoserine phosphatase from Streptomyces coelicolor (strain ATCC BAA-471 / A3(2) / M145).